Reading from the N-terminus, the 165-residue chain is NADPH-dependent 7-cyano-7-deazaguanine reductase (165 aa).

C56 functions as the Thioimide intermediate in the catalytic mechanism. D63 serves as the catalytic Proton donor. Residues 78-80 (VES) and 97-98 (HE) contribute to the substrate site.

The protein belongs to the GTP cyclohydrolase I family. QueF type 1 subfamily.

It localises to the cytoplasm. The catalysed reaction is 7-aminomethyl-7-carbaguanine + 2 NADP(+) = 7-cyano-7-deazaguanine + 2 NADPH + 3 H(+). It participates in tRNA modification; tRNA-queuosine biosynthesis. Catalyzes the NADPH-dependent reduction of 7-cyano-7-deazaguanine (preQ0) to 7-aminomethyl-7-deazaguanine (preQ1). This Bacillus licheniformis (strain ATCC 14580 / DSM 13 / JCM 2505 / CCUG 7422 / NBRC 12200 / NCIMB 9375 / NCTC 10341 / NRRL NRS-1264 / Gibson 46) protein is NADPH-dependent 7-cyano-7-deazaguanine reductase.